A 125-amino-acid polypeptide reads, in one-letter code: Immunoglobulin heavy variable 4-39 (125 aa).

Positions 1 to 26 (MDLMCKKMKHLWFFLLLVAAPRWVLS) are cleaved as a signal peptide. The interval 27-51 (QLQLQESGPGLVKPSETLSLTCTVS) is framework-1. One can recognise an Ig-like domain in the interval 27 to 125 (QLQLQESGPG…ADTAVYYCAR (99 aa)). C48 and C123 form a disulfide bridge. The complementarity-determining-1 stretch occupies residues 52–61 (GGSISSSSYY). The interval 62 to 78 (WGWIRQPPGKGLEWIGS) is framework-2. The complementarity-determining-2 stretch occupies residues 79-85 (IYYSGST). The framework-3 stretch occupies residues 86–123 (YYNPSLKSRVTISVDTSKNQFSLKLSSVTAADTAVYYC). The complementarity-determining-3 stretch occupies residues 124 to 125 (AR).

In terms of assembly, immunoglobulins are composed of two identical heavy chains and two identical light chains; disulfide-linked.

It localises to the secreted. The protein localises to the cell membrane. In terms of biological role, v region of the variable domain of immunoglobulin heavy chains that participates in the antigen recognition. Immunoglobulins, also known as antibodies, are membrane-bound or secreted glycoproteins produced by B lymphocytes. In the recognition phase of humoral immunity, the membrane-bound immunoglobulins serve as receptors which, upon binding of a specific antigen, trigger the clonal expansion and differentiation of B lymphocytes into immunoglobulins-secreting plasma cells. Secreted immunoglobulins mediate the effector phase of humoral immunity, which results in the elimination of bound antigens. The antigen binding site is formed by the variable domain of one heavy chain, together with that of its associated light chain. Thus, each immunoglobulin has two antigen binding sites with remarkable affinity for a particular antigen. The variable domains are assembled by a process called V-(D)-J rearrangement and can then be subjected to somatic hypermutations which, after exposure to antigen and selection, allow affinity maturation for a particular antigen. The sequence is that of Immunoglobulin heavy variable 4-39 from Homo sapiens (Human).